We begin with the raw amino-acid sequence, 153 residues long: MEKSILLINGPNLNLLGTREPHIYGSTTLSDVEESSKGHAASLGASLQTFQSNHEGAIVDRIHAARGNTDAIIINPGAYTHTSVAIRDALLGVEIPFIELHVSNVHAREPFRHHSYFSDKASGIIVGLGVYGYKVAVEHVALNFKPLEKKAAL.

Y24 serves as the catalytic Proton acceptor. Residues N75, H81, and D88 each contribute to the substrate site. H101 functions as the Proton donor in the catalytic mechanism. Substrate contacts are provided by residues 102–103 (VS) and R112.

It belongs to the type-II 3-dehydroquinase family. As to quaternary structure, homododecamer. Adopts a ring-like structure, composed of an arrangement of two hexameric rings stacked on top of one another.

The enzyme catalyses 3-dehydroquinate = 3-dehydroshikimate + H2O. It participates in aromatic compound metabolism; 3,4-dihydroxybenzoate biosynthesis; 3,4-dihydroxybenzoate from 3-dehydroquinate: step 1/2. In terms of biological role, is involved in the catabolism of quinate. Allows the utilization of quinate as carbon source via the beta-ketoadipate pathway. The protein is Catabolic 3-dehydroquinase of Emericella nidulans (strain FGSC A4 / ATCC 38163 / CBS 112.46 / NRRL 194 / M139) (Aspergillus nidulans).